A 288-amino-acid polypeptide reads, in one-letter code: GTP-binding protein 8 (288 aa).

Residues 109-282 (HRPEVCFIGR…RCFIADITGN (174 aa)) enclose the EngB-type G domain. Residues 117–124 (GRSNVGKS), 146–150 (GHTKK), 164–167 (DMPG), 226–229 (TKID), and 261–263 (VSA) each bind GTP. Mg(2+) is bound by residues S124 and T148.

The protein belongs to the TRAFAC class TrmE-Era-EngA-EngB-Septin-like GTPase superfamily. EngB GTPase family. The cofactor is Mg(2+).

The chain is GTP-binding protein 8 (GTPBP8) from Bos taurus (Bovine).